Reading from the N-terminus, the 288-residue chain is uncharacterized protein (288 aa).

4 helical membrane-spanning segments follow: residues 43–63, 190–210, 243–263, and 265–285; these read LFTL…NYII, LFIF…FLLE, GIPI…SILI, and LLQM…NKSL.

The protein localises to the cell membrane. This is an uncharacterized protein from Rickettsia prowazekii (strain Madrid E).